Consider the following 812-residue polypeptide: Glycerol-3-phosphate acyltransferase (812 aa).

The HXXXXD motif motif lies at 308–313 (CHRSHM).

The protein belongs to the GPAT/DAPAT family.

The protein localises to the cell inner membrane. It catalyses the reaction sn-glycerol 3-phosphate + an acyl-CoA = a 1-acyl-sn-glycero-3-phosphate + CoA. It participates in phospholipid metabolism; CDP-diacylglycerol biosynthesis; CDP-diacylglycerol from sn-glycerol 3-phosphate: step 1/3. This Pseudoalteromonas translucida (strain TAC 125) protein is Glycerol-3-phosphate acyltransferase.